Reading from the N-terminus, the 356-residue chain is MKREQLIQNIEKLKHVMPPYVLEYYQSKLTVPYSLNTLYEYLKEYERFFSWLVDSGVADVDKITDVSLSVLENLTKRDLESFILYLRERPRLNTHSTRYGVSQTTINRTLSALSSLYKYLTEEVENEDGEPYFYRNVMKKVQTKKKSETLASRAENIKGKLFLGDETQGFLDYIDSEYEKTLSNRAHSSFFKNKERDLAIIALILASGIRLSEAVNVDLRDLNLNTMIVEVTRKGGKRDAVPFAPFAKTYFERYLEVRSQRYKTTAKDTAFFVTLYRDIASRIDPSSVEKLVAKYSQAFKVRVTPHKLRHTLATRLYAQTNSQVLVSNQLGHASTQVTDLYTHIINEEQKNALDSL.

The Core-binding (CB) domain maps to 16–121 (VMPPYVLEYY…ALSSLYKYLT (106 aa)). The Tyr recombinase domain occupies 169 to 354 (GFLDYIDSEY…INEEQKNALD (186 aa)). Active-site residues include Arg-210, Lys-234, His-306, Arg-309, and His-332. Catalysis depends on Tyr-341, which acts as the O-(3'-phospho-DNA)-tyrosine intermediate.

This sequence belongs to the 'phage' integrase family. XerS subfamily.

It is found in the cytoplasm. Its activity is regulated as follows. FtsK is required for recombination. Its function is as follows. Site-specific tyrosine recombinase, which acts by catalyzing the cutting and rejoining of the recombining DNA molecules. Essential to convert dimers of the bacterial chromosome into monomers to permit their segregation at cell division. The sequence is that of Tyrosine recombinase XerS from Lactococcus lactis subsp. cremoris (strain SK11).